Here is a 528-residue protein sequence, read N- to C-terminus: Tyrosine--tRNA ligase, cytoplasmic (528 aa).

Met-1 carries the post-translational modification N-acetylmethionine. The residue at position 2 (Gly-2) is an N-acetylglycine; in Tyrosine--tRNA ligase, cytoplasmic, N-terminally processed. Tyr-39 lines the L-tyrosine pocket. Tyr-39 lines the trans-resveratrol pocket. The 'HIGH' region signature appears at 44 to 52 (TTGKPHVAY). Positions 166, 170, 173, and 188 each coordinate L-tyrosine. Trans-resveratrol is bound by residues Gln-170 and Asp-173. Lys-197 is modified (N6-acetyllysine). The residue at position 205 (Ser-205) is a Phosphoserine. The residue at position 206 (Lys-206) is an N6-acetyllysine. The 'KMSKS' region signature appears at 222–226 (KMSSS). Positions 242–247 (KKKLKK) match the Nuclear localization signal motif. Residues 339–363 (AAYPDPSKQKPMAKGPAKNSEPEEV) are disordered. The tRNA-binding domain occupies 364–468 (IPSRLDIRVG…AGSAPGEHVF (105 aa)). Ser-386 carries the post-translational modification Phosphoserine. N6-acetyllysine is present on residues Lys-474, Lys-482, and Lys-490.

This sequence belongs to the class-I aminoacyl-tRNA synthetase family. As to quaternary structure, homodimer. Interacts (when binding to resveratrol) with PARP1; interaction stimulates the poly-ADP-ribosyltransferase activity of PARP1.

Its subcellular location is the cytoplasm. The protein localises to the nucleus. The enzyme catalyses tRNA(Tyr) + L-tyrosine + ATP = L-tyrosyl-tRNA(Tyr) + AMP + diphosphate + H(+). Its activity is regulated as follows. Resveratrol strongly inhibits the tyrosine--tRNA ligase activity. Functionally, tyrosine--tRNA ligase that catalyzes the attachment of tyrosine to tRNA(Tyr) in a two-step reaction: tyrosine is first activated by ATP to form Tyr-AMP and then transferred to the acceptor end of tRNA(Tyr). Also acts as a positive regulator of poly-ADP-ribosylation in the nucleus, independently of its tyrosine--tRNA ligase activity. Activity is switched upon resveratrol-binding: resveratrol strongly inhibits the tyrosine--tRNA ligase activity and promotes relocalization to the nucleus, where YARS1 specifically stimulates the poly-ADP-ribosyltransferase activity of PARP1. The sequence is that of Tyrosine--tRNA ligase, cytoplasmic from Homo sapiens (Human).